Consider the following 176-residue polypeptide: Cytochrome b (176 aa).

3 helical membrane passes run 33-53 (FGSLLGICLALQILTGLFLAM), 77-98 (WILRYLHANGASMFFICLYLHV), and 113-133 (WNIGVTPLFAVMATAFMGYVL). Heme b contacts are provided by His83 and His97.

This sequence belongs to the cytochrome b family. As to quaternary structure, the cytochrome bc1 complex contains 11 subunits: 3 respiratory subunits (MT-CYB, CYC1 and UQCRFS1), 2 core proteins (UQCRC1 and UQCRC2) and 6 low-molecular weight proteins (UQCRH/QCR6, UQCRB/QCR7, UQCRQ/QCR8, UQCR10/QCR9, UQCR11/QCR10 and a cleavage product of UQCRFS1). This cytochrome bc1 complex then forms a dimer. Heme b serves as cofactor.

The protein localises to the mitochondrion inner membrane. Component of the ubiquinol-cytochrome c reductase complex (complex III or cytochrome b-c1 complex) that is part of the mitochondrial respiratory chain. The b-c1 complex mediates electron transfer from ubiquinol to cytochrome c. Contributes to the generation of a proton gradient across the mitochondrial membrane that is then used for ATP synthesis. This chain is Cytochrome b (MT-CYB), found in Myotis leibii (Eastern small-footed myotis).